Here is a 120-residue protein sequence, read N- to C-terminus: Immunoglobulin kappa variable 2D-29 (120 aa).

An N-terminal signal peptide occupies residues Met1–Ala20. The interval Asp21–Cys43 is framework-1. In terms of domain architecture, Ig-like spans Asp21–Pro120. Cys43 and Cys113 are joined by a disulfide. Positions Lys44 to Tyr59 are complementarity-determining-1. Residues Trp60–Tyr74 are framework-2. The segment at Glu75–Ser81 is complementarity-determining-2. The tract at residues Gly82–Cys113 is framework-3. The segment at Met114–Pro120 is complementarity-determining-3.

In terms of assembly, immunoglobulins are composed of two identical heavy chains and two identical light chains; disulfide-linked.

The protein localises to the secreted. The protein resides in the cell membrane. V region of the variable domain of immunoglobulin light chains that participates in the antigen recognition. Immunoglobulins, also known as antibodies, are membrane-bound or secreted glycoproteins produced by B lymphocytes. In the recognition phase of humoral immunity, the membrane-bound immunoglobulins serve as receptors which, upon binding of a specific antigen, trigger the clonal expansion and differentiation of B lymphocytes into immunoglobulins-secreting plasma cells. Secreted immunoglobulins mediate the effector phase of humoral immunity, which results in the elimination of bound antigens. The antigen binding site is formed by the variable domain of one heavy chain, together with that of its associated light chain. Thus, each immunoglobulin has two antigen binding sites with remarkable affinity for a particular antigen. The variable domains are assembled by a process called V-(D)-J rearrangement and can then be subjected to somatic hypermutations which, after exposure to antigen and selection, allow affinity maturation for a particular antigen. The chain is Immunoglobulin kappa variable 2D-29 from Homo sapiens (Human).